The chain runs to 30 residues: Peptidase 1 (30 aa).

This sequence belongs to the peptidase C1 family.

The protein resides in the secreted. It carries out the reaction Broad endopeptidase specificity.. In terms of biological role, thiol protease that hydrolyzes proteins, with a preference for Phe or basic residues. In Dermatophagoides microceras (House dust mite), this protein is Peptidase 1 (DERM1).